The primary structure comprises 392 residues: Isocitrate dehydrogenase [NAD] subunit gamma, mitochondrial (392 aa).

The transit peptide at 1 to 39 directs the protein to the mitochondrion; that stretch reads MALKVATAAGGAVKAALRPALLWRPWEVLGSHEAPRRSF. Citrate is bound by residues Thr119 and Asn132. The substrate site is built by Arg135, Arg166, and Asp253. Asp253 serves as a coordination point for Mn(2+). 3 residues coordinate ADP: Asn311, Thr312, and Asn323.

This sequence belongs to the isocitrate and isopropylmalate dehydrogenases family. As to quaternary structure, heterooligomer of subunits alpha (IDH3A), beta (IDH3B), and gamma (IDH3G) in the apparent ratio of 2:1:1. The heterodimer containing one IDH3A and one IDH3B subunit and the heterodimer containing one IDH3A and one IDH3G subunit assemble into a heterotetramer (which contains two subunits of IDH3A, one of IDH3B and one of IDH3G) and further into the heterooctamer. Mg(2+) serves as cofactor. Requires Mn(2+) as cofactor.

The protein localises to the mitochondrion. With respect to regulation, the heterotetramer and the heterodimer composed of IDH3A and IDH3G subunits can be allosterically activated by citrate (CIT) or/and ADP, and the two activators can act independently or synergistically. The heterodimer composed of IDH3A and IDH3B subunits cannot be allosterically regulated and the allosteric regulation of the heterotetramer is through the IDH3G subunit and not the IDH3B subunit. The IDH3G subunit contains the allosteric site which consists of a CIT-binding site and an ADP-binding site, and the binding of CIT and ADP causes conformational changes at the allosteric site which are transmitted to the active site in the catalytic subunit (IDH3A) through a cascade of conformational changes at the heterodimer interface, leading to stabilization of the isocitrate-binding at the active site and thus activation of the enzyme. ATP can activate the heterotetramer and the heterodimer composed of IDH3A and IDH3G subunits at low concentrations but inhibits their activities at high concentrations, whereas ATP exhibits only inhibitory effect on the heterodimer composed of IDH3A and IDH3B subunits. Its function is as follows. Regulatory subunit which plays a role in the allosteric regulation of the enzyme catalyzing the decarboxylation of isocitrate (ICT) into alpha-ketoglutarate. The heterodimer composed of the alpha (IDH3A) and beta (IDH3B) subunits and the heterodimer composed of the alpha (IDH3A) and gamma (IDH3G) subunits, have considerable basal activity but the full activity of the heterotetramer (containing two subunits of IDH3A, one of IDH3B and one of IDH3G) requires the assembly and cooperative function of both heterodimers. This is Isocitrate dehydrogenase [NAD] subunit gamma, mitochondrial (IDH3G) from Bos taurus (Bovine).